A 545-amino-acid chain; its full sequence is CTP synthase (545 aa).

The segment at 1-266 (MATNYIFVTG…DDFVCERFRL (266 aa)) is amidoligase domain. Ser14 lines the CTP pocket. Ser14 contacts UTP. ATP-binding positions include 15–20 (SLGKGI) and Asp72. Mg(2+) is bound by residues Asp72 and Glu140. Residues 147-149 (DIE), 187-192 (KTKPTQ), and Lys223 each bind CTP. Residues 187–192 (KTKPTQ) and Lys223 contribute to the UTP site. ATP is bound at residue 239-241 (KDV). Residues 291-542 (TIGMVGKYTE…VKAAYENHKK (252 aa)) form the Glutamine amidotransferase type-1 domain. L-glutamine is bound at residue Gly352. Cys379 acts as the Nucleophile; for glutamine hydrolysis in catalysis. L-glutamine-binding positions include 380–383 (LGMQ), Glu403, and Arg470. Residues His515 and Glu517 contribute to the active site.

Belongs to the CTP synthase family. In terms of assembly, homotetramer.

It carries out the reaction UTP + L-glutamine + ATP + H2O = CTP + L-glutamate + ADP + phosphate + 2 H(+). It catalyses the reaction L-glutamine + H2O = L-glutamate + NH4(+). The catalysed reaction is UTP + NH4(+) + ATP = CTP + ADP + phosphate + 2 H(+). The protein operates within pyrimidine metabolism; CTP biosynthesis via de novo pathway; CTP from UDP: step 2/2. Allosterically activated by GTP, when glutamine is the substrate; GTP has no effect on the reaction when ammonia is the substrate. The allosteric effector GTP functions by stabilizing the protein conformation that binds the tetrahedral intermediate(s) formed during glutamine hydrolysis. Inhibited by the product CTP, via allosteric rather than competitive inhibition. Its function is as follows. Catalyzes the ATP-dependent amination of UTP to CTP with either L-glutamine or ammonia as the source of nitrogen. Regulates intracellular CTP levels through interactions with the four ribonucleotide triphosphates. In Haemophilus influenzae (strain PittEE), this protein is CTP synthase.